A 300-amino-acid polypeptide reads, in one-letter code: NAD kinase (300 aa).

Aspartate 75 functions as the Proton acceptor in the catalytic mechanism. Residues 75-76 (DG), 149-150 (ND), arginine 177, aspartate 179, 190-195 (TAYALS), alanine 214, and glutamine 248 contribute to the NAD(+) site.

It belongs to the NAD kinase family. It depends on a divalent metal cation as a cofactor.

It is found in the cytoplasm. The catalysed reaction is NAD(+) + ATP = ADP + NADP(+) + H(+). Involved in the regulation of the intracellular balance of NAD and NADP, and is a key enzyme in the biosynthesis of NADP. Catalyzes specifically the phosphorylation on 2'-hydroxyl of the adenosine moiety of NAD to yield NADP. The sequence is that of NAD kinase from Burkholderia mallei (strain SAVP1).